The primary structure comprises 654 residues: Integrator complex subunit 9 (654 aa).

The 1D-myo-inositol hexakisphosphate site is built by methionine 1, arginine 2, threonine 18, phenylalanine 19, arginine 504, lysine 508, and arginine 509.

Belongs to the metallo-beta-lactamase superfamily. RNA-metabolizing metallo-beta-lactamase-like family. INTS9 subfamily. As to quaternary structure, belongs to the multiprotein complex Integrator, at least composed of IntS1, IntS2, IntS3, IntS4, omd/IntS5, IntS6, defl/IntS7, IntS8, IntS9, IntS10, IntS11, IntS12, asun/IntS13, IntS14 and IntS15. The core complex associates with protein phosphatase 2A subunits mts/PP2A and Pp2A-29B, to form the Integrator-PP2A (INTAC) complex. Within the complex, interacts with IntS1 and IntS12. IntS9 is part of the RNA endonuclease subcomplex, composed of IntS4, IntS9, IntS11 and inositol hexakisphosphate (InsP6).

It localises to the nucleus. It is found in the cytoplasm. The protein localises to the cytosol. Its function is as follows. Component of the integrator complex, a multiprotein complex that terminates RNA polymerase II (Pol II) transcription in the promoter-proximal region of genes. The integrator complex provides a quality checkpoint during transcription elongation by driving premature transcription termination of transcripts that are unfavorably configured for transcriptional elongation: the complex terminates transcription by (1) catalyzing dephosphorylation of the C-terminal domain (CTD) of Pol II subunit Polr2A/Rbp1 and Spt5, and (2) degrading the exiting nascent RNA transcript via endonuclease activity. The integrator complex is also involved in the 3'-end processing of the U7 snRNA, and also the spliceosomal snRNAs U1, U2, U4 and U5. This is Integrator complex subunit 9 from Drosophila melanogaster (Fruit fly).